The chain runs to 180 residues: Large ribosomal subunit protein uL5 (180 aa).

The protein belongs to the universal ribosomal protein uL5 family. In terms of assembly, part of the 50S ribosomal subunit; part of the 5S rRNA/L5/L18/L25 subcomplex. Contacts the 5S rRNA and the P site tRNA. Forms a bridge to the 30S subunit in the 70S ribosome.

Functionally, this is one of the proteins that bind and probably mediate the attachment of the 5S RNA into the large ribosomal subunit, where it forms part of the central protuberance. In the 70S ribosome it contacts protein S13 of the 30S subunit (bridge B1b), connecting the 2 subunits; this bridge is implicated in subunit movement. Contacts the P site tRNA; the 5S rRNA and some of its associated proteins might help stabilize positioning of ribosome-bound tRNAs. In Streptococcus agalactiae serotype Ia (strain ATCC 27591 / A909 / CDC SS700), this protein is Large ribosomal subunit protein uL5.